The primary structure comprises 468 residues: MHYHIIGIAGAGMSAIAHILLDQGHTVSGSDVQRNALTEALEQRGALIHDGHDPAWIAGADALVATSAVRDDHVELSAARARGIPVLRRADLWREWSQQRRVVAVAGTHGKTTTTALIALMLTQAGGNPGFLIGGETPDLGIHARWGDPAAPLVVEADEYDRTFLALTPDVAVMTNVEWDHVDIYPSPDNYEAAFRLFTRRVAQPQRLIVCGDDPGALRVANHPDAQQYGIEEAIARNPASCRLAPMDWMAANVRYDGAMTNFDLWRYDRRTFGARLDGTYTMRLVGDHNVRNALAAIAVATLLGVERDAIADALAAYRGARRRFDIKGEANGITIIDDYAHHPTEARATLAAARARFPQRRLVVYLQPHTFSRTQALRDAWADAFDHADVVRIGDVYPARETGDPRTVAHALAGCIRHNDVQAVGNVVEAAATIGGLLRPGDVLLTLGAGDGYRVGELIIDTLRQQN.

Residue 107–113 (GTHGKTT) participates in ATP binding.

The protein belongs to the MurCDEF family.

Its subcellular location is the cytoplasm. The catalysed reaction is UDP-N-acetyl-alpha-D-muramate + L-alanine + ATP = UDP-N-acetyl-alpha-D-muramoyl-L-alanine + ADP + phosphate + H(+). The protein operates within cell wall biogenesis; peptidoglycan biosynthesis. Cell wall formation. The polypeptide is UDP-N-acetylmuramate--L-alanine ligase (Roseiflexus sp. (strain RS-1)).